A 191-amino-acid polypeptide reads, in one-letter code: UPF0149 protein VC_2476 (191 aa).

It belongs to the UPF0149 family.

The polypeptide is UPF0149 protein VC_2476 (Vibrio cholerae serotype O1 (strain ATCC 39315 / El Tor Inaba N16961)).